The sequence spans 590 residues: Aspartate--tRNA(Asp/Asn) ligase (590 aa).

E176 contacts L-aspartate. Residues Q200–K203 form an aspartate region. L-aspartate contacts are provided by R222 and H451. Position 222–224 (R222–E224) interacts with ATP. E485 serves as a coordination point for ATP. R492 provides a ligand contact to L-aspartate. G537–R540 provides a ligand contact to ATP.

This sequence belongs to the class-II aminoacyl-tRNA synthetase family. Type 1 subfamily. In terms of assembly, homodimer.

The protein localises to the cytoplasm. The catalysed reaction is tRNA(Asx) + L-aspartate + ATP = L-aspartyl-tRNA(Asx) + AMP + diphosphate. Aspartyl-tRNA synthetase with relaxed tRNA specificity since it is able to aspartylate not only its cognate tRNA(Asp) but also tRNA(Asn). Reaction proceeds in two steps: L-aspartate is first activated by ATP to form Asp-AMP and then transferred to the acceptor end of tRNA(Asp/Asn). The polypeptide is Aspartate--tRNA(Asp/Asn) ligase (Ehrlichia ruminantium (strain Welgevonden)).